We begin with the raw amino-acid sequence, 147 residues long: 3-dehydroquinate dehydratase (147 aa).

The Proton acceptor role is filled by Tyr26. Positions 77, 83, and 90 each coordinate substrate. The active-site Proton donor is His103. Substrate contacts are provided by residues 104-105 (LS) and Arg114.

It belongs to the type-II 3-dehydroquinase family. In terms of assembly, homododecamer.

The catalysed reaction is 3-dehydroquinate = 3-dehydroshikimate + H2O. The protein operates within metabolic intermediate biosynthesis; chorismate biosynthesis; chorismate from D-erythrose 4-phosphate and phosphoenolpyruvate: step 3/7. Catalyzes a trans-dehydration via an enolate intermediate. This is 3-dehydroquinate dehydratase from Proteus mirabilis (strain HI4320).